The chain runs to 498 residues: Glycerol kinase (498 aa).

Residue Thr12 participates in ADP binding. ATP contacts are provided by Thr12, Thr13, and Ser14. Thr12 lines the sn-glycerol 3-phosphate pocket. An ADP-binding site is contributed by Arg16. Sn-glycerol 3-phosphate-binding residues include Arg82, Glu83, Tyr134, and Asp243. Residues Arg82, Glu83, Tyr134, Asp243, and Gln244 each coordinate glycerol. Thr265 and Gly308 together coordinate ADP. The ATP site is built by Thr265, Gly308, Gln312, and Gly412. Gly412 serves as a coordination point for ADP.

This sequence belongs to the FGGY kinase family.

It catalyses the reaction glycerol + ATP = sn-glycerol 3-phosphate + ADP + H(+). Its pathway is polyol metabolism; glycerol degradation via glycerol kinase pathway; sn-glycerol 3-phosphate from glycerol: step 1/1. With respect to regulation, inhibited by fructose 1,6-bisphosphate (FBP). Key enzyme in the regulation of glycerol uptake and metabolism. Catalyzes the phosphorylation of glycerol to yield sn-glycerol 3-phosphate. In Rhizobium rhizogenes (strain K84 / ATCC BAA-868) (Agrobacterium radiobacter), this protein is Glycerol kinase.